The chain runs to 348 residues: Phosphoribosylformylglycinamidine cyclo-ligase (348 aa).

The protein belongs to the AIR synthase family.

The protein localises to the cytoplasm. The enzyme catalyses 2-formamido-N(1)-(5-O-phospho-beta-D-ribosyl)acetamidine + ATP = 5-amino-1-(5-phospho-beta-D-ribosyl)imidazole + ADP + phosphate + H(+). Its pathway is purine metabolism; IMP biosynthesis via de novo pathway; 5-amino-1-(5-phospho-D-ribosyl)imidazole from N(2)-formyl-N(1)-(5-phospho-D-ribosyl)glycinamide: step 2/2. The sequence is that of Phosphoribosylformylglycinamidine cyclo-ligase from Cereibacter sphaeroides (strain ATCC 17029 / ATH 2.4.9) (Rhodobacter sphaeroides).